The chain runs to 298 residues: GTPase Era (298 aa).

The Era-type G domain occupies 4–171 (RAGFVALIGR…KEKIVSFLPE (168 aa)). The interval 12 to 19 (GRTNVGKS) is G1. GTP is bound at residue 12 to 19 (GRTNVGKS). Residues 38–42 (QTTRN) are G2. The interval 59–62 (DTPG) is G3. Residues 59–63 (DTPGI) and 121–124 (NKID) contribute to the GTP site. The segment at 121–124 (NKID) is G4. Positions 150 to 152 (ISA) are G5. The region spanning 202–280 (LEEEVPHGVY…FLQLWVKVRK (79 aa)) is the KH type-2 domain.

The protein belongs to the TRAFAC class TrmE-Era-EngA-EngB-Septin-like GTPase superfamily. Era GTPase family. As to quaternary structure, monomer.

It is found in the cytoplasm. The protein localises to the cell membrane. Functionally, an essential GTPase that binds both GDP and GTP, with rapid nucleotide exchange. Plays a role in 16S rRNA processing and 30S ribosomal subunit biogenesis and possibly also in cell cycle regulation and energy metabolism. The protein is GTPase Era of Caldanaerobacter subterraneus subsp. tengcongensis (strain DSM 15242 / JCM 11007 / NBRC 100824 / MB4) (Thermoanaerobacter tengcongensis).